We begin with the raw amino-acid sequence, 514 residues long: Na(+)/H(+) antiporter NhaB (514 aa).

A run of 11 helical transmembrane segments spans residues 21–41, 43–63, 88–108, 143–163, 203–223, 239–259, 304–324, 349–369, 390–410, 448–468, and 484–504; these read LAIVVFLIINPIVFFFISPFI, GWLLVAEFIFTLAMALKCYPL, IMANFEVILLLIFMVAGIFFM, FLDALTVVAVIISVAMGFYGV, LMMHAGVGTALGGVMTVVGEP, FFLRMAPVTIPVFICGLLTCF, ALIAIWLIVGLAFHLAAVGLI, QESLPFTALLVVFFSVVAVII, LALFYLFNGLLSSISDNVFVA, ATPNGQAAFLFLLTSSISPLI, and IVLSIIGLLAIEFILPAATIW.

Belongs to the NhaB Na(+)/H(+) (TC 2.A.34) antiporter family.

It localises to the cell inner membrane. The catalysed reaction is 2 Na(+)(in) + 3 H(+)(out) = 2 Na(+)(out) + 3 H(+)(in). Na(+)/H(+) antiporter that extrudes sodium in exchange for external protons. This chain is Na(+)/H(+) antiporter NhaB, found in Haemophilus influenzae (strain ATCC 51907 / DSM 11121 / KW20 / Rd).